Consider the following 423-residue polypeptide: Levansucrase (423 aa).

The sucrose site is built by W47, D48, S119, R193, and D194. The active-site Nucleophile is D48. The active-site Proton donor/acceptor is E278.

This sequence belongs to the glycosyl hydrolase 68 family.

The protein localises to the secreted. The enzyme catalyses [6)-beta-D-fructofuranosyl-(2-&gt;](n) alpha-D-glucopyranoside + sucrose = [6)-beta-D-fructofuranosyl-(2-&gt;](n+1) alpha-D-glucopyranoside + D-glucose. Its function is as follows. Catalyzes the synthesis of levan, a fructose polymer, by transferring the fructosyl moiety from sucrose to a growing acceptor molecule. In Zymomonas mobilis subsp. mobilis (strain ATCC 10988 / DSM 424 / LMG 404 / NCIMB 8938 / NRRL B-806 / ZM1), this protein is Levansucrase.